The chain runs to 200 residues: Kunitz type trypsin inhibitor 111 (200 aa).

An N-terminal signal peptide occupies residues 1–24 (MSTISFTIFILANVWLLVVTTSIA). 3 cysteine pairs are disulfide-bonded: Cys-62-Cys-108, Cys-160-Cys-172, and Cys-165-Cys-168.

This sequence belongs to the protease inhibitor I3 (leguminous Kunitz-type inhibitor) family. Interacts with SCP1.

It localises to the secreted. It is found in the extracellular space. The protein resides in the apoplast. This is Kunitz type trypsin inhibitor 111 (KPI111) from Medicago truncatula (Barrel medic).